The sequence spans 255 residues: tRNA (guanine-N(1)-)-methyltransferase (255 aa).

Residues G113 and V133–L138 contribute to the S-adenosyl-L-methionine site.

The protein belongs to the RNA methyltransferase TrmD family. As to quaternary structure, homodimer.

The protein resides in the cytoplasm. It carries out the reaction guanosine(37) in tRNA + S-adenosyl-L-methionine = N(1)-methylguanosine(37) in tRNA + S-adenosyl-L-homocysteine + H(+). In terms of biological role, specifically methylates guanosine-37 in various tRNAs. The polypeptide is tRNA (guanine-N(1)-)-methyltransferase (Francisella philomiragia subsp. philomiragia (strain ATCC 25017 / CCUG 19701 / FSC 153 / O#319-036)).